Reading from the N-terminus, the 335-residue chain is Phosphatidylcholine-sterol acyltransferase (335 aa).

A signal peptide spans 1-18; sequence MKKWFVCLLGLVALTVQA. S34 functions as the Nucleophile in the catalytic mechanism. Residues D306 and H309 contribute to the active site.

Belongs to the 'GDSL' lipolytic enzyme family.

It carries out the reaction a sterol + a 1,2-diacyl-sn-glycero-3-phosphocholine = a sterol ester + a 1-acyl-sn-glycero-3-phosphocholine. Functionally, fatty acid transfer between phosphatidylcholine and cholesterol. This is Phosphatidylcholine-sterol acyltransferase from Aeromonas hydrophila.